We begin with the raw amino-acid sequence, 155 residues long: Transcriptional repressor NrdR (155 aa).

A zinc finger lies at 3–34 (CPFCGNVDTQVKDSRPAEDHVAIRRRRFCPAC). The ATP-cone domain occupies 49-139 (LVVIKSSGKR…VYKNFQAADD (91 aa)).

Belongs to the NrdR family. Zn(2+) serves as cofactor.

Its function is as follows. Negatively regulates transcription of bacterial ribonucleotide reductase nrd genes and operons by binding to NrdR-boxes. The protein is Transcriptional repressor NrdR of Dinoroseobacter shibae (strain DSM 16493 / NCIMB 14021 / DFL 12).